A 365-amino-acid chain; its full sequence is Phospho-N-acetylmuramoyl-pentapeptide-transferase (365 aa).

10 helical membrane-spanning segments follow: residues 22–42 (YISV…LALG), 74–94 (TMGG…WGDL), 95–115 (TSIY…IGFF), 133–153 (YKFA…FYLL), 168–188 (SLYI…IING), 201–221 (GLAI…AYIE), 240–260 (LAEV…FLWF), 267–287 (VFMG…IAVM), 292–312 (LIFF…MLQV), and 342–362 (KVVI…LAAI).

It belongs to the glycosyltransferase 4 family. MraY subfamily. Mg(2+) serves as cofactor.

The protein localises to the cell inner membrane. The enzyme catalyses UDP-N-acetyl-alpha-D-muramoyl-L-alanyl-gamma-D-glutamyl-meso-2,6-diaminopimeloyl-D-alanyl-D-alanine + di-trans,octa-cis-undecaprenyl phosphate = di-trans,octa-cis-undecaprenyl diphospho-N-acetyl-alpha-D-muramoyl-L-alanyl-D-glutamyl-meso-2,6-diaminopimeloyl-D-alanyl-D-alanine + UMP. Its pathway is cell wall biogenesis; peptidoglycan biosynthesis. Its function is as follows. Catalyzes the initial step of the lipid cycle reactions in the biosynthesis of the cell wall peptidoglycan: transfers peptidoglycan precursor phospho-MurNAc-pentapeptide from UDP-MurNAc-pentapeptide onto the lipid carrier undecaprenyl phosphate, yielding undecaprenyl-pyrophosphoryl-MurNAc-pentapeptide, known as lipid I. In Francisella tularensis subsp. tularensis (strain WY96-3418), this protein is Phospho-N-acetylmuramoyl-pentapeptide-transferase.